Here is a 471-residue protein sequence, read N- to C-terminus: V-type ATP synthase beta chain (471 aa).

The protein belongs to the ATPase alpha/beta chains family.

In terms of biological role, produces ATP from ADP in the presence of a proton gradient across the membrane. The V-type beta chain is a regulatory subunit. This is V-type ATP synthase beta chain (atpB) from Deinococcus radiodurans (strain ATCC 13939 / DSM 20539 / JCM 16871 / CCUG 27074 / LMG 4051 / NBRC 15346 / NCIMB 9279 / VKM B-1422 / R1).